The sequence spans 901 residues: Protein translocase subunit SecA (901 aa).

Residues glutamine 87, 105–109 (GEGKT), and aspartate 512 each bind ATP. Cysteine 885, cysteine 887, cysteine 896, and histidine 897 together coordinate Zn(2+).

This sequence belongs to the SecA family. Monomer and homodimer. Part of the essential Sec protein translocation apparatus which comprises SecA, SecYEG and auxiliary proteins SecDF-YajC and YidC. Requires Zn(2+) as cofactor.

The protein localises to the cell inner membrane. It localises to the cytoplasm. The enzyme catalyses ATP + H2O + cellular proteinSide 1 = ADP + phosphate + cellular proteinSide 2.. Part of the Sec protein translocase complex. Interacts with the SecYEG preprotein conducting channel. Has a central role in coupling the hydrolysis of ATP to the transfer of proteins into and across the cell membrane, serving both as a receptor for the preprotein-SecB complex and as an ATP-driven molecular motor driving the stepwise translocation of polypeptide chains across the membrane. The sequence is that of Protein translocase subunit SecA from Salmonella agona (strain SL483).